Consider the following 538-residue polypeptide: Carboxypeptidase 2 (538 aa).

An N-terminal signal peptide occupies residues 1-21; sequence MVAYRFLTLISLGLGSHCASA. N46 carries an N-linked (GlcNAc...) asparagine glycan. Residues 53–76 are disordered; it reads PAFTSPGTVPRGFSDGTSGPTRDE. The region spanning 71 to 351 is the Peptidase M14 domain; sequence GPTRDETMEG…VMVKSILQTA (281 aa). Zn(2+) is bound by residues H136, E139, and H224. The active-site Proton donor/acceptor is the E322. 2 N-linked (GlcNAc...) asparagine glycosylation sites follow: N393 and N459.

This sequence belongs to the peptidase M14 family. Requires Zn(2+) as cofactor.

The protein localises to the secreted. Its function is as follows. Extracellular metalloprotease that contributes to pathogenicity. This Trichophyton tonsurans (Scalp ringworm fungus) protein is Carboxypeptidase 2 (MCPB).